The sequence spans 458 residues: MELPPGPRDDPHAWDDDSDPELEPDTDAQAEAYVARLLSPPKLGLAPPRAPPLPAPTVSFGSLEPRAASKGPTVAVPGLLSLPPELLLEICAYLDARLVLHVLPRVCHALRDLVRDRVTWRLRAQRRVRAPYPVVEEEDFDWPTACIELEQHLSRWADDGRRAEYFCLADGHFASIDSVLLLQGGTLCLSGSRDRNVNLWDLQQLGVEPSRVLVKTLGTQKNSTHKGWVWSLAALDHRVCSGSWDSTVKLWDMAADGQQFGEIKGKAAVLCLSYRPDILVTGTYDKKVTVYDPRVGPALLKSRRLHSSAVLALLADDRHIISGSEDHTLVVFDRRANSVLQRLQLDSYLLCMSYQEPQLWAGDNQGLLHVFANRSGCFQLVRSFDVGHRSQITGIKHSLGALYTTSTDKTIRVHVPTDPPRTICTRSHHNVLNGICAEGNLVVAASGGLSLEVWRLQA.

An N-acetylmethionine modification is found at Met-1. Positions 1-28 (MELPPGPRDDPHAWDDDSDPELEPDTDA) are disordered. The span at 16–28 (DDSDPELEPDTDA) shows a compositional bias: acidic residues. Ser-18 and Ser-59 each carry phosphoserine. The region spanning 76 to 123 (VPGLLSLPPELLLEICAYLDARLVLHVLPRVCHALRDLVRDRVTWRLR) is the F-box domain. 7 WD repeats span residues 171 to 210 (GHFASIDSVLLLQGGTLCLSGSRDRNVNLWDLQQLGVEPS), 224 to 261 (THKGWVWSLAALDHRVCSGSWDSTVKLWDMAADGQQFG), 264 to 301 (KGKAAVLCLSYRPDILVTGTYDKKVTVYDPRVGPALLK), 305 to 342 (LHSSAVLALLADDRHIISGSEDHTLVVFDRRANSVLQR), 344 to 381 (QLDSYLLCMSYQEPQLWAGDNQGLLHVFANRSGCFQLV), 387 to 424 (GHRSQITGIKHSLGALYTTSTDKTIRVHVPTDPPRTIC), and 427 to 458 (SHHNVLNGICAEGNLVVAASGGLSLEVWRLQA).

As to quaternary structure, interacts with SKP1 and CUL1.

Its function is as follows. Substrate-recognition component of the SCF (SKP1-CUL1-F-box protein)-type E3 ubiquitin ligase complex. This chain is F-box/WD repeat-containing protein 9 (FBXW9), found in Bos taurus (Bovine).